An 839-amino-acid polypeptide reads, in one-letter code: Protein translocase subunit SecA (839 aa).

Residues Gln-85, 103–107, and Asp-492 contribute to the ATP site; that span reads GEGKT. The tract at residues 794–820 is disordered; that stretch reads EINYSGPDAGDTKKEPVRRKEKKIGRN. Residues Cys-823, Cys-825, Cys-834, and Cys-835 each contribute to the Zn(2+) site.

This sequence belongs to the SecA family. In terms of assembly, monomer and homodimer. Part of the essential Sec protein translocation apparatus which comprises SecA, SecYEG and auxiliary proteins SecDF. Other proteins may also be involved. It depends on Zn(2+) as a cofactor.

It localises to the cell membrane. It is found in the cytoplasm. It catalyses the reaction ATP + H2O + cellular proteinSide 1 = ADP + phosphate + cellular proteinSide 2.. Its function is as follows. Part of the Sec protein translocase complex. Interacts with the SecYEG preprotein conducting channel. Has a central role in coupling the hydrolysis of ATP to the transfer of proteins into and across the cell membrane, serving as an ATP-driven molecular motor driving the stepwise translocation of polypeptide chains across the membrane. This chain is Protein translocase subunit SecA, found in Clostridium acetobutylicum (strain ATCC 824 / DSM 792 / JCM 1419 / IAM 19013 / LMG 5710 / NBRC 13948 / NRRL B-527 / VKM B-1787 / 2291 / W).